The following is a 292-amino-acid chain: MRFVFIIALLLIGASLAHPADPIRAKRDVSASEDEFSGDSSGEISGESSGEASGEASGEASGEASGEASGESSGETSGESSGDEETSGEGSGEEGSGDTSPVVPVDELTLQQLETLNTYAQQVQAESQKLIHQANFVITEMTALSANAQNLGILSNIVLANSQMVLDSARLSLNETETETGTSAPATCVSSAVCYGDSGCGSGKCIGALAGTCNCNSCVFGWPCQEDSACGGFNGACNSITATCDCFAAYTKNNLTLAEALTSFCNVETCNGAEDNVEKCHGLPCNYGFCVC.

An N-terminal signal peptide occupies residues M1–A17. Positions D28–V103 are disordered. Residues G38–S80 show a composition bias toward low complexity. Positions S81–S96 are enriched in acidic residues. 2 N-linked (GlcNAc...) asparagine glycosylation sites follow: N174 and N254.

In Caenorhabditis elegans, this protein is Chondroitin proteoglycan 3.